The chain runs to 443 residues: Structure-specific endonuclease subunit SLX1 homolog (443 aa).

The segment at 1-27 (METFILSSDSDDDSGPPPSKRRTIEGI) is disordered. In terms of domain architecture, GIY-YIG spans 171 to 258 (EFYGVYCLIS…PLVSKSLKEK (88 aa)). The SLX1-type zinc-finger motif lies at 340–395 (CRICGKDIEKLWSLVRCISATCPSHFHSKCLSENGLKLKNEHVDHVYPLKANCPTC).

This sequence belongs to the SLX1 family. In terms of assembly, forms a heterodimer with him-18/slx-4. It depends on a divalent metal cation as a cofactor.

The protein resides in the nucleus. Functionally, catalytic subunit of a heterodimeric structure-specific endonuclease that resolves DNA secondary structures generated during DNA repair and recombination. Has endonuclease activity towards branched DNA substrates, introducing single-strand cuts in duplex DNA close to junctions with ss-DNA (Potential). Has a preference for replication forks over 5' flap structures or Holliday junctions and shows much lower activity toward 3' flap structures. Required for proper crossover distribution through inhibition of crossover formation at the central region of chromosomes. The polypeptide is Structure-specific endonuclease subunit SLX1 homolog (Caenorhabditis elegans).